A 1370-amino-acid chain; its full sequence is Putative surface protein SA2285 (1370 aa).

A signal peptide spans Met-1–Ala-50. Disordered stretches follow at residues Asn-77–Pro-116, Lys-439–Thr-472, and Glu-495–Glu-1344. Composition is skewed to basic and acidic residues over residues Asp-96–Pro-116, Lys-450–Lys-460, Gly-504–Pro-522, Ser-553–Asn-569, Lys-578–Lys-588, Ser-605–Ile-618, Gly-632–Pro-650, Ser-681–Asn-697, Lys-706–Lys-716, Ser-733–Ile-746, Gly-760–Pro-778, Ser-809–Asn-825, Lys-834–Lys-844, Ser-861–Ile-874, Gly-888–Pro-906, Ser-937–Asn-953, Lys-962–Lys-972, Ser-989–Ile-1002, Gly-1016–Pro-1034, Ser-1065–Asn-1081, Lys-1090–Lys-1100, Ser-1117–Val-1130, Lys-1174–Lys-1185, and Phe-1202–Gln-1221. The G5 1 domain maps to Ser-418 to Thr-500. In terms of domain architecture, G5 2 spans Tyr-546–Thr-628. Residues Tyr-674 to Thr-756 form the G5 3 domain. Residues Tyr-802 to Thr-884 form the G5 4 domain. The 83-residue stretch at Tyr-930 to Thr-1012 folds into the G5 5 domain. Residues Tyr-1058–Lys-1140 enclose the G5 6 domain. A G5 7 domain is found at His-1186–Lys-1268. A compositionally biased stretch (polar residues) spans Gln-1224 to Pro-1238. Positions Glu-1252–Ser-1282 are enriched in basic and acidic residues. Positions Leu-1338–Gly-1342 match the LPXTG sorting signal motif. Pentaglycyl murein peptidoglycan amidated threonine is present on Thr-1341. Positions Gly-1342–Asn-1370 are cleaved as a propeptide — removed by sortase.

The protein localises to the secreted. Its subcellular location is the cell wall. The polypeptide is Putative surface protein SA2285 (Staphylococcus aureus (strain N315)).